We begin with the raw amino-acid sequence, 390 residues long: Mannitol-1-phosphate 5-dehydrogenase (390 aa).

NAD(+) is bound at residue 7–18 (AVHFGGGNIGRG). Lysine 216 is an active-site residue.

This sequence belongs to the mannitol dehydrogenase family. As to quaternary structure, monomer.

The enzyme catalyses D-mannitol 1-phosphate + NAD(+) = beta-D-fructose 6-phosphate + NADH + H(+). Catalyzes the NAD(H)-dependent interconversion of D-fructose 6-phosphate and D-mannitol 1-phosphate in the mannitol metabolic pathway. Required for the process of sporulation on senescing leaf material. The protein is Mannitol-1-phosphate 5-dehydrogenase (mpd1) of Phaeosphaeria nodorum (strain SN15 / ATCC MYA-4574 / FGSC 10173) (Glume blotch fungus).